The chain runs to 134 residues: Holo-[acyl-carrier-protein] synthase (134 aa).

Positions 8 and 58 each coordinate Mg(2+).

Belongs to the P-Pant transferase superfamily. AcpS family. The cofactor is Mg(2+).

The protein resides in the cytoplasm. The catalysed reaction is apo-[ACP] + CoA = holo-[ACP] + adenosine 3',5'-bisphosphate + H(+). Functionally, transfers the 4'-phosphopantetheine moiety from coenzyme A to a Ser of acyl-carrier-protein. This is Holo-[acyl-carrier-protein] synthase from Ruminiclostridium cellulolyticum (strain ATCC 35319 / DSM 5812 / JCM 6584 / H10) (Clostridium cellulolyticum).